The sequence spans 394 residues: Homoserine O-succinyltransferase (394 aa).

Residues 54 to 368 enclose the AB hydrolase-1 domain; sequence NAVLICHALS…SSPAGHDAFL (315 aa). The active-site Nucleophile is the Ser-160. Arg-236 contacts substrate. Residues Asp-331 and His-364 contribute to the active site. Asp-365 contributes to the substrate binding site.

This sequence belongs to the AB hydrolase superfamily. MetX family. Homodimer.

The protein resides in the cytoplasm. It carries out the reaction L-homoserine + succinyl-CoA = O-succinyl-L-homoserine + CoA. It participates in amino-acid biosynthesis; L-methionine biosynthesis via de novo pathway; O-succinyl-L-homoserine from L-homoserine: step 1/1. Transfers a succinyl group from succinyl-CoA to L-homoserine, forming succinyl-L-homoserine. This Magnetococcus marinus (strain ATCC BAA-1437 / JCM 17883 / MC-1) protein is Homoserine O-succinyltransferase.